The sequence spans 392 residues: Elongation factor Tu (392 aa).

One can recognise a tr-type G domain in the interval 10-202; sequence KVHVNVGTIG…VLDEYIEDPI (193 aa). The interval 19–26 is G1; the sequence is GHVDHGKT. A GTP-binding site is contributed by 19–26; sequence GHVDHGKT. A Mg(2+)-binding site is contributed by threonine 26. Residues 60–64 form a G2 region; that stretch reads GITIN. The G3 stretch occupies residues 81–84; it reads DCPG. Residues 81–85 and 136–139 each bind GTP; these read DCPGH and NKCD. Residues 136-139 form a G4 region; that stretch reads NKCD. The tract at residues 174–176 is G5; sequence SAL.

The protein belongs to the TRAFAC class translation factor GTPase superfamily. Classic translation factor GTPase family. EF-Tu/EF-1A subfamily. In terms of assembly, monomer.

It localises to the cytoplasm. The enzyme catalyses GTP + H2O = GDP + phosphate + H(+). Its function is as follows. GTP hydrolase that promotes the GTP-dependent binding of aminoacyl-tRNA to the A-site of ribosomes during protein biosynthesis. This Phytoplasma mali (strain AT) protein is Elongation factor Tu.